The following is a 168-amino-acid chain: Crossover junction endodeoxyribonuclease RuvC (168 aa).

Residues Asp-8, Glu-68, and Asp-140 contribute to the active site. 3 residues coordinate Mg(2+): Asp-8, Glu-68, and Asp-140.

This sequence belongs to the RuvC family. Homodimer which binds Holliday junction (HJ) DNA. The HJ becomes 2-fold symmetrical on binding to RuvC with unstacked arms; it has a different conformation from HJ DNA in complex with RuvA. In the full resolvosome a probable DNA-RuvA(4)-RuvB(12)-RuvC(2) complex forms which resolves the HJ. The cofactor is Mg(2+).

The protein resides in the cytoplasm. The catalysed reaction is Endonucleolytic cleavage at a junction such as a reciprocal single-stranded crossover between two homologous DNA duplexes (Holliday junction).. Functionally, the RuvA-RuvB-RuvC complex processes Holliday junction (HJ) DNA during genetic recombination and DNA repair. Endonuclease that resolves HJ intermediates. Cleaves cruciform DNA by making single-stranded nicks across the HJ at symmetrical positions within the homologous arms, yielding a 5'-phosphate and a 3'-hydroxyl group; requires a central core of homology in the junction. The consensus cleavage sequence is 5'-(A/T)TT(C/G)-3'. Cleavage occurs on the 3'-side of the TT dinucleotide at the point of strand exchange. HJ branch migration catalyzed by RuvA-RuvB allows RuvC to scan DNA until it finds its consensus sequence, where it cleaves and resolves the cruciform DNA. The protein is Crossover junction endodeoxyribonuclease RuvC of Lawsonia intracellularis (strain PHE/MN1-00).